Consider the following 479-residue polypeptide: Sulfate adenylyltransferase subunit 1 (479 aa).

In terms of domain architecture, tr-type G spans 25–239 (KSLLRFLTCG…EVLETVDIQR (215 aa)). The G1 stretch occupies residues 34–41 (GSVDDGKS). 34-41 (GSVDDGKS) contributes to the GTP binding site. The G2 stretch occupies residues 92–96 (GITID). Residues 113–116 (DTPG) are G3. GTP is bound by residues 113–117 (DTPGH) and 168–171 (NKMD). Positions 168-171 (NKMD) are G4. Positions 206–208 (SAL) are G5.

Belongs to the TRAFAC class translation factor GTPase superfamily. Classic translation factor GTPase family. CysN/NodQ subfamily. As to quaternary structure, heterodimer composed of CysD, the smaller subunit, and CysN.

The enzyme catalyses sulfate + ATP + H(+) = adenosine 5'-phosphosulfate + diphosphate. Its pathway is sulfur metabolism; hydrogen sulfide biosynthesis; sulfite from sulfate: step 1/3. In terms of biological role, with CysD forms the ATP sulfurylase (ATPS) that catalyzes the adenylation of sulfate producing adenosine 5'-phosphosulfate (APS) and diphosphate, the first enzymatic step in sulfur assimilation pathway. APS synthesis involves the formation of a high-energy phosphoric-sulfuric acid anhydride bond driven by GTP hydrolysis by CysN coupled to ATP hydrolysis by CysD. This chain is Sulfate adenylyltransferase subunit 1, found in Salmonella choleraesuis (strain SC-B67).